The primary structure comprises 506 residues: Lysine--tRNA ligase (506 aa).

Mg(2+) is bound by residues glutamate 416 and glutamate 423.

This sequence belongs to the class-II aminoacyl-tRNA synthetase family. In terms of assembly, homodimer. The cofactor is Mg(2+).

It localises to the cytoplasm. The catalysed reaction is tRNA(Lys) + L-lysine + ATP = L-lysyl-tRNA(Lys) + AMP + diphosphate. The chain is Lysine--tRNA ligase from Sodalis glossinidius (strain morsitans).